The primary structure comprises 255 residues: Ribosomal RNA small subunit methyltransferase A (255 aa).

S-adenosyl-L-methionine is bound by residues histidine 12, leucine 14, glycine 39, glutamate 60, aspartate 81, and asparagine 103.

It belongs to the class I-like SAM-binding methyltransferase superfamily. rRNA adenine N(6)-methyltransferase family. RsmA subfamily.

Its subcellular location is the cytoplasm. The catalysed reaction is adenosine(1518)/adenosine(1519) in 16S rRNA + 4 S-adenosyl-L-methionine = N(6)-dimethyladenosine(1518)/N(6)-dimethyladenosine(1519) in 16S rRNA + 4 S-adenosyl-L-homocysteine + 4 H(+). Its function is as follows. Specifically dimethylates two adjacent adenosines (A1518 and A1519) in the loop of a conserved hairpin near the 3'-end of 16S rRNA in the 30S particle. May play a critical role in biogenesis of 30S subunits. In Variovorax paradoxus (strain S110), this protein is Ribosomal RNA small subunit methyltransferase A.